Here is a 225-residue protein sequence, read N- to C-terminus: UPF0758 protein Sama_0327 (225 aa).

The MPN domain maps to 102-224; the sequence is VLTSPDLTRD…IVSFAERGWI (123 aa). Zn(2+) is bound by residues histidine 173, histidine 175, and aspartate 186. Positions 173-186 match the JAMM motif motif; sequence HNHPSGVAEPSQAD.

It belongs to the UPF0758 family.

The protein is UPF0758 protein Sama_0327 of Shewanella amazonensis (strain ATCC BAA-1098 / SB2B).